A 199-amino-acid chain; its full sequence is MAP6 domain-containing protein 1 (199 aa).

Residues cysteine 5, cysteine 10, and cysteine 11 are each lipidated (S-palmitoyl cysteine). The disordered stretch occupies residues tyrosine 33–proline 110. At serine 38 the chain carries Phosphoserine. Mn stretches follow at residues threonine 130–valine 143 and aspartate 165–valine 177. Serine 167 is subject to Phosphoserine.

Belongs to the STOP family. As to quaternary structure, interacts with calmodulin. Post-translationally, palmitoylated. Palmitoylation enhances association with microtubules.

Its subcellular location is the golgi apparatus. The protein localises to the cytoplasm. It localises to the cytoskeleton. Its function is as follows. May have microtubule-stabilizing activity. The chain is MAP6 domain-containing protein 1 (MAP6D1) from Homo sapiens (Human).